We begin with the raw amino-acid sequence, 620 residues long: 1-deoxy-D-xylulose-5-phosphate synthase (620 aa).

Thiamine diphosphate contacts are provided by residues His-80 and 121–123; that span reads GHS. Asp-152 contacts Mg(2+). Residues 153–154, Asn-181, Tyr-288, and Glu-370 each bind thiamine diphosphate; that span reads GA. Residue Asn-181 participates in Mg(2+) binding.

This sequence belongs to the transketolase family. DXPS subfamily. Homodimer. Requires Mg(2+) as cofactor. Thiamine diphosphate is required as a cofactor.

It carries out the reaction D-glyceraldehyde 3-phosphate + pyruvate + H(+) = 1-deoxy-D-xylulose 5-phosphate + CO2. Its pathway is metabolic intermediate biosynthesis; 1-deoxy-D-xylulose 5-phosphate biosynthesis; 1-deoxy-D-xylulose 5-phosphate from D-glyceraldehyde 3-phosphate and pyruvate: step 1/1. Catalyzes the acyloin condensation reaction between C atoms 2 and 3 of pyruvate and glyceraldehyde 3-phosphate to yield 1-deoxy-D-xylulose-5-phosphate (DXP). This chain is 1-deoxy-D-xylulose-5-phosphate synthase, found in Photobacterium profundum (strain SS9).